A 230-amino-acid polypeptide reads, in one-letter code: Urease accessory protein UreF (230 aa).

It belongs to the UreF family. In terms of assembly, ureD, UreF and UreG form a complex that acts as a GTP-hydrolysis-dependent molecular chaperone, activating the urease apoprotein by helping to assemble the nickel containing metallocenter of UreC. The UreE protein probably delivers the nickel.

Its subcellular location is the cytoplasm. Required for maturation of urease via the functional incorporation of the urease nickel metallocenter. This is Urease accessory protein UreF from Marinomonas sp. (strain MWYL1).